We begin with the raw amino-acid sequence, 552 residues long: Serine/threonine-protein kinase RIO2 (552 aa).

The region spanning 97-272 is the Protein kinase domain; sequence VGNQMGVGKE…DRDVKCIKDF (176 aa). Residue lysine 123 coordinates ATP. Aspartate 228 serves as the catalytic Proton acceptor. Phosphoserine occurs at positions 332, 335, 337, 350, 362, 380, 382, 385, and 390. The short motif at 399–408 is the Nuclear export signal element; the sequence is ALEEIKGQVV. 3 positions are modified to phosphoserine: serine 412, serine 417, and serine 442. Tyrosine 445 bears the Phosphotyrosine mark. A Phosphoserine modification is found at serine 548.

The protein belongs to the protein kinase superfamily. RIO-type Ser/Thr kinase family. Associated with late 40S pre-ribosomal particles. Interacts with PLK1 (via its N-terminus). Mg(2+) serves as cofactor. In terms of processing, autophosphorylated (in vitro). Phosphorylation at Ser-335, Ser-380, Ser-548 by PLK1 affects the timing of the metaphase-anaphase transition.

It is found in the cytoplasm. The enzyme catalyses L-seryl-[protein] + ATP = O-phospho-L-seryl-[protein] + ADP + H(+). The catalysed reaction is L-threonyl-[protein] + ATP = O-phospho-L-threonyl-[protein] + ADP + H(+). In terms of biological role, serine/threonine-protein kinase involved in the final steps of cytoplasmic maturation of the 40S ribosomal subunit. Involved in export of the 40S pre-ribosome particles (pre-40S) from the nucleus to the cytoplasm. Its kinase activity is required for the release of NOB1, PNO1 and LTV1 from the late pre-40S and the processing of 18S-E pre-rRNA to the mature 18S rRNA. Regulates the timing of the metaphase-anaphase transition during mitotic progression, and its phosphorylation, most likely by PLK1, regulates this function. The polypeptide is Serine/threonine-protein kinase RIO2 (Homo sapiens (Human)).